The chain runs to 272 residues: HMP-PP phosphatase (272 aa).

The active-site Nucleophile is the Asp-8. Positions 8, 10, and 212 each coordinate Mg(2+).

The protein belongs to the HAD-like hydrolase superfamily. Cof family. Requires Mg(2+) as cofactor.

It carries out the reaction 4-amino-2-methyl-5-(diphosphooxymethyl)pyrimidine + H2O = 4-amino-2-methyl-5-(phosphooxymethyl)pyrimidine + phosphate + H(+). Functionally, catalyzes the hydrolysis of 4-amino-2-methyl-5-hydroxymethylpyrimidine pyrophosphate (HMP-PP) to 4-amino-2-methyl-5-hydroxymethylpyrimidine phosphate (HMP-P). The sequence is that of HMP-PP phosphatase from Klebsiella pneumoniae (strain 342).